Consider the following 99-residue polypeptide: Large ribosomal subunit protein bL28 (99 aa).

The protein belongs to the bacterial ribosomal protein bL28 family.

In Rhizobium etli (strain CIAT 652), this protein is Large ribosomal subunit protein bL28.